Here is an 824-residue protein sequence, read N- to C-terminus: MAIYDFGNIEKKWQERWQENKAFSIIERDRPKYYVLEMFPYPSGKIHMGHVRNYSIGDVVARFKRMKGYNVLHPMGWDSFGLPAENAAIKHGIHPDHWTKENVKEMKEQLDALGLSYDWDREVSTCTPEYYKWTQWLFLQFYHKGLAYKKESQVNWCPSCETVLANEQVVNGGCDRCDSSVGKKNLNQWYFKITDYAEALLEDIKLLDGWPEKVKTMQQNWIGKSHGAEIDFPIENTSKELKVFTTRPDTIYGATYMVLAPEHPYVMELVKETEYEEAVVAFRNKLQHMSDIERTSTEIEKEGIFIGKYCINPVSNEKIPIYIANYVLADYGTGAIMAVPAHDQRDLDFARKYDITVTPVIRPIDESDGFDIEKEAYTDSGIMINSEKFNGLDSEKAYEDIAKHIETLNAGKRTINYRLRDWLLSRQRYWGTPIPIIYCDDCGIVPVREEELPVKLPVDVTFSGKGSSPLETSEGFLNTNCPSCGKMAKRETDTMDTFVDSSWYFLRYTDANNEQLPFSKEAANYWVPVDQYIGGVEHAILHLLYSRFFTKVMKDLGLTDQPEPFKKLLTQGMVLKDGAKMSKSKGNVVSPEEIIQKYGADTARLFVLFAAPPERDLEWSDQGVEGSYRFLNRVWRLAEEFIDNNLFMSTSLGEALTKRDKDLKYTIHYTIKKVTSDVEDRFNFNTAISAVMELINELYKYKETDPSKLNGDLFREGIETSILLLAPFAPHFTEELWEKLGKAESVHMTNWPEYDHEAIIKDEVEIVMQVNGKVKDRMMVPTNVSKEELESLAMKNEKIIQIIEGKQIIKIIAVPKKLVNIVIK.

The 'HIGH' region motif lies at 40–50; that stretch reads PYPSGKIHMGH. The 'KMSKS' region motif lies at 580–584; it reads KMSKS. Lys583 is an ATP binding site.

It belongs to the class-I aminoacyl-tRNA synthetase family.

It localises to the cytoplasm. It catalyses the reaction tRNA(Leu) + L-leucine + ATP = L-leucyl-tRNA(Leu) + AMP + diphosphate. This Alkaliphilus metalliredigens (strain QYMF) protein is Leucine--tRNA ligase.